The following is an 88-amino-acid chain: Putative regulatory protein DvMF_1139 (88 aa).

The protein belongs to the RemA family.

This chain is Putative regulatory protein DvMF_1139, found in Nitratidesulfovibrio vulgaris (strain DSM 19637 / Miyazaki F) (Desulfovibrio vulgaris).